The chain runs to 266 residues: UPF0294 protein YafD (266 aa).

Belongs to the UPF0294 family.

The protein localises to the cytoplasm. The protein is UPF0294 protein YafD of Salmonella dublin (strain CT_02021853).